The following is a 218-amino-acid chain: UPF0173 metal-dependent hydrolase Mpal_1063 (218 aa).

Belongs to the UPF0173 family.

In Methanosphaerula palustris (strain ATCC BAA-1556 / DSM 19958 / E1-9c), this protein is UPF0173 metal-dependent hydrolase Mpal_1063.